The chain runs to 256 residues: Putative transposase for insertion sequence element IS112 (256 aa).

It belongs to the transposase 11 family.

Involved in the transposition of the insertion sequence IS112 which inactivates the SalI restriction-modification system. The protein is Putative transposase for insertion sequence element IS112 of Streptomyces albus G.